We begin with the raw amino-acid sequence, 67 residues long: uncharacterized protein (67 aa).

This sequence belongs to the flocculin family.

This is an uncharacterized protein from Saccharomyces cerevisiae (strain ATCC 204508 / S288c) (Baker's yeast).